The sequence spans 209 residues: Kynurenine formamidase (209 aa).

Position 20 (Trp20) interacts with substrate. His50, His54, and Asp56 together coordinate Zn(2+). The Proton donor/acceptor role is filled by His60. The Zn(2+) site is built by His161 and Glu173.

The protein belongs to the Cyclase 1 superfamily. KynB family. In terms of assembly, homodimer. Zn(2+) serves as cofactor.

The enzyme catalyses N-formyl-L-kynurenine + H2O = L-kynurenine + formate + H(+). The protein operates within amino-acid degradation; L-tryptophan degradation via kynurenine pathway; L-kynurenine from L-tryptophan: step 2/2. Its function is as follows. Catalyzes the hydrolysis of N-formyl-L-kynurenine to L-kynurenine, the second step in the kynurenine pathway of tryptophan degradation. In Bacillus cereus (strain ZK / E33L), this protein is Kynurenine formamidase.